The sequence spans 568 residues: ATP-dependent RNA helicase MRH4, mitochondrial (568 aa).

The N-terminal 50 residues, 1 to 50 (MVSILAIRTFNPLGHFVSTQCVRAYAINSVRAGSKSSSVRAGSKNDTTRA), are a transit peptide targeting the mitochondrion. The span at 36-49 (SSSVRAGSKNDTTR) shows a compositional bias: polar residues. Residues 36 to 64 (SSSVRAGSKNDTTRASSKKNKAGKSKLQL) form a disordered region. The short motif at 143–150 (EIHPSPIQ) is the Q motif element. A Helicase ATP-binding domain is found at 160-348 (NLMEPKLQVH…TKMFPNAIPL (189 aa)). 173–180 (AETGSGKT) is a binding site for ATP. The DEAD box motif lies at 296 to 299 (DEAD). The region spanning 379–568 (ALAQTLYAIA…TILKKNKALT (190 aa)) is the Helicase C-terminal domain.

This sequence belongs to the DEAD box helicase family. MRH4 subfamily.

It localises to the mitochondrion. It catalyses the reaction ATP + H2O = ADP + phosphate + H(+). Its function is as follows. ATP-binding RNA helicase involved in mitochondrial RNA metabolism. Required for maintenance of mitochondrial DNA. The polypeptide is ATP-dependent RNA helicase MRH4, mitochondrial (MRH4) (Candida glabrata (strain ATCC 2001 / BCRC 20586 / JCM 3761 / NBRC 0622 / NRRL Y-65 / CBS 138) (Yeast)).